We begin with the raw amino-acid sequence, 258 residues long: Hemin import ATP-binding protein HmuV (258 aa).

The ABC transporter domain occupies 1 to 238; sequence MLDIDVSNLS…DILERTYRTP (238 aa). An ATP-binding site is contributed by 34 to 41; it reads GENGAGKS.

It belongs to the ABC transporter superfamily. Heme (hemin) importer (TC 3.A.1.14.5) family. In terms of assembly, the complex is composed of two ATP-binding proteins (HmuV), two transmembrane proteins (HmuU) and a solute-binding protein (HmuT).

It is found in the cell inner membrane. Part of the ABC transporter complex HmuTUV involved in hemin import. Responsible for energy coupling to the transport system. This is Hemin import ATP-binding protein HmuV from Idiomarina loihiensis (strain ATCC BAA-735 / DSM 15497 / L2-TR).